Consider the following 345-residue polypeptide: UDP-3-O-acylglucosamine N-acyltransferase (345 aa).

The Proton acceptor role is filled by histidine 253.

This sequence belongs to the transferase hexapeptide repeat family. LpxD subfamily. Homotrimer.

The catalysed reaction is a UDP-3-O-[(3R)-3-hydroxyacyl]-alpha-D-glucosamine + a (3R)-hydroxyacyl-[ACP] = a UDP-2-N,3-O-bis[(3R)-3-hydroxyacyl]-alpha-D-glucosamine + holo-[ACP] + H(+). Its pathway is bacterial outer membrane biogenesis; LPS lipid A biosynthesis. In terms of biological role, catalyzes the N-acylation of UDP-3-O-acylglucosamine using 3-hydroxyacyl-ACP as the acyl donor. Is involved in the biosynthesis of lipid A, a phosphorylated glycolipid that anchors the lipopolysaccharide to the outer membrane of the cell. The protein is UDP-3-O-acylglucosamine N-acyltransferase of Rickettsia massiliae (strain Mtu5).